Consider the following 541-residue polypeptide: Histone acetyltransferase ESA1 (541 aa).

Residues 1 to 11 show a composition bias toward basic and acidic residues; that stretch reads MAVAEIKKEKG. The tract at residues 1-31 is disordered; the sequence is MAVAEIKKEKGSSLSPEPSSPIQILSTEPDA. Residues 12–30 show a composition bias toward polar residues; sequence SSLSPEPSSPIQILSTEPD. The 51-residue stretch at 47–97 folds into the Tudor-knot domain; that stretch reads PGCKVHVSKDGEFRLAEILQEHIKKGRKVFYVHYQDFNKRLDEWIELDRID. The interval 111–154 is disordered; sequence TKENKSKKKSKSKGQTKLSKNNTTANSTTGTPQPSDGQPIMGDD. Over residues 115–124 the composition is skewed to basic residues; it reads KSKKKSKSKG. The segment covering 131-146 has biased composition (polar residues); sequence NNTTANSTTGTPQPSD. An MYST-type HAT domain is found at 196 to 529; it reads ARVRNLSTII…LNPKLLHWTP (334 aa). The segment at 229-254 adopts a C2HC MYST-type; degenerate zinc-finger fold; that stretch reads IYICDFTLSYFGSKKQFERFRSKCSM. The ESA1-RPD3 motif signature appears at 279 to 300; the sequence is RTWCRNLCLLSKLFLDHKTLYY. K296 bears the N6-acetyllysine; by autocatalysis mark. Acetyl-CoA is bound by residues 337-341 and 346-352; these read ACILT and QKRGFGK. The active-site Proton donor/acceptor is the E372. S376 lines the acetyl-CoA pocket. The tract at residues 413–438 is disordered; sequence YDEAENGKDSSATPTPGPGSNASQSS.

This sequence belongs to the MYST (SAS/MOZ) family. Component of the NuA4 histone acetyltransferase complex. In terms of processing, autoacetylation at Lys-296 is required for proper function.

It is found in the nucleus. It localises to the chromosome. It catalyses the reaction L-lysyl-[histone] + acetyl-CoA = N(6)-acetyl-L-lysyl-[histone] + CoA + H(+). It carries out the reaction L-lysyl-[protein] + acetyl-CoA = N(6)-acetyl-L-lysyl-[protein] + CoA + H(+). The enzyme catalyses 2-hydroxyisobutanoyl-CoA + L-lysyl-[protein] = N(6)-(2-hydroxyisobutanoyl)-L-lysyl-[protein] + CoA + H(+). The catalysed reaction is (2E)-butenoyl-CoA + L-lysyl-[protein] = N(6)-(2E)-butenoyl-L-lysyl-[protein] + CoA + H(+). Its function is as follows. Catalytic component of the NuA4 histone acetyltransferase (HAT) complex which is involved in epigenetic transcriptional activation of selected genes principally by acetylation of nucleosomal histones H4, H3, H2B, H2A and H2A variant H2A.Z. Acetylates histone H4 to form H4K5ac, H4K8ac, H4K12ac and H4K16ac, histone H3 to form H3K14ac, and histone H2A to form H2AK4ac and H2AK7ac. The NuA4 complex is involved in the DNA damage response and is required for chromosome segregation. The NuA4 complex plays a direct role in repair of DNA double-strand breaks (DSBs) through homologous recombination. Recruitment to promoters depends on H3K4me. Also acetylates non-histone proteins. In addition to protein acetyltransferase, can use different acyl-CoA substrates, such as 2-hydroxyisobutanoyl-CoA (2-hydroxyisobutyryl-CoA) or (2E)-butenoyl-CoA (crotonyl-CoA), and is able to mediate protein 2-hydroxyisobutyrylation and crotonylation, respectively. The chain is Histone acetyltransferase ESA1 (ESA1) from Candida albicans (strain SC5314 / ATCC MYA-2876) (Yeast).